Consider the following 432-residue polypeptide: Glutamate-1-semialdehyde 2,1-aminomutase (432 aa).

K269 is subject to N6-(pyridoxal phosphate)lysine.

Belongs to the class-III pyridoxal-phosphate-dependent aminotransferase family. HemL subfamily. Homodimer. Requires pyridoxal 5'-phosphate as cofactor.

The protein localises to the cytoplasm. The catalysed reaction is (S)-4-amino-5-oxopentanoate = 5-aminolevulinate. The protein operates within porphyrin-containing compound metabolism; protoporphyrin-IX biosynthesis; 5-aminolevulinate from L-glutamyl-tRNA(Glu): step 2/2. This Desulforudis audaxviator (strain MP104C) protein is Glutamate-1-semialdehyde 2,1-aminomutase.